A 325-amino-acid chain; its full sequence is Putative HTH-type transcriptional regulatory protein MK1005 (325 aa).

Positions 128–190 (VDELDVSRVR…FERRVAELLE (63 aa)) constitute an HTH cro/C1-type domain. A DNA-binding region (H-T-H motif) is located at residues 139–158 (RQLRREGGRITLARAEEADV).

In Methanopyrus kandleri (strain AV19 / DSM 6324 / JCM 9639 / NBRC 100938), this protein is Putative HTH-type transcriptional regulatory protein MK1005.